A 105-amino-acid chain; its full sequence is Large ribosomal subunit protein uL24 (105 aa).

It belongs to the universal ribosomal protein uL24 family. As to quaternary structure, part of the 50S ribosomal subunit.

In terms of biological role, one of two assembly initiator proteins, it binds directly to the 5'-end of the 23S rRNA, where it nucleates assembly of the 50S subunit. Its function is as follows. One of the proteins that surrounds the polypeptide exit tunnel on the outside of the subunit. This Leptothrix cholodnii (strain ATCC 51168 / LMG 8142 / SP-6) (Leptothrix discophora (strain SP-6)) protein is Large ribosomal subunit protein uL24.